We begin with the raw amino-acid sequence, 318 residues long: Methionyl-tRNA formyltransferase (318 aa).

112 to 115 (SLLP) provides a ligand contact to (6S)-5,6,7,8-tetrahydrofolate.

The protein belongs to the Fmt family.

The enzyme catalyses L-methionyl-tRNA(fMet) + (6R)-10-formyltetrahydrofolate = N-formyl-L-methionyl-tRNA(fMet) + (6S)-5,6,7,8-tetrahydrofolate + H(+). In terms of biological role, attaches a formyl group to the free amino group of methionyl-tRNA(fMet). The formyl group appears to play a dual role in the initiator identity of N-formylmethionyl-tRNA by promoting its recognition by IF2 and preventing the misappropriation of this tRNA by the elongation apparatus. This is Methionyl-tRNA formyltransferase from Citrifermentans bemidjiense (strain ATCC BAA-1014 / DSM 16622 / JCM 12645 / Bem) (Geobacter bemidjiensis).